A 600-amino-acid chain; its full sequence is CTP synthase (600 aa).

Residues 304–570 (TIVLVGKYTH…IQSGEEVEWS (267 aa)) form the Glutamine amidotransferase type-1 domain. Active-site for GATase activity residues include Cys-403, His-532, and Glu-534.

Belongs to the CTP synthase family.

The enzyme catalyses UTP + L-glutamine + ATP + H2O = CTP + L-glutamate + ADP + phosphate + 2 H(+). It functions in the pathway pyrimidine metabolism; CTP biosynthesis via de novo pathway; CTP from UDP: step 2/2. Catalyzes the ATP-dependent amination of UTP to CTP with either L-glutamine or ammonia as the source of nitrogen. The sequence is that of CTP synthase (ura7) from Schizosaccharomyces pombe (strain 972 / ATCC 24843) (Fission yeast).